A 284-amino-acid chain; its full sequence is Phosphoenolpyruvate guanylyltransferase (284 aa).

Positions 94-123 (ADLSADEPAGTDAERRADPSAENRASTSAQ) are disordered. Residues 105-114 (DAERRADPSA) are compositionally biased toward basic and acidic residues. Threonine 203, glycine 219, and serine 222 together coordinate phosphoenolpyruvate.

It belongs to the CofC family.

The enzyme catalyses phosphoenolpyruvate + GTP + H(+) = enolpyruvoyl-2-diphospho-5'-guanosine + diphosphate. It participates in cofactor biosynthesis; coenzyme F420 biosynthesis. Guanylyltransferase that catalyzes the activation of phosphoenolpyruvate (PEP) as enolpyruvoyl-2-diphospho-5'-guanosine, via the condensation of PEP with GTP. It is involved in the biosynthesis of coenzyme F420, a hydride carrier cofactor. The chain is Phosphoenolpyruvate guanylyltransferase from Sanguibacter keddieii (strain ATCC 51767 / DSM 10542 / NCFB 3025 / ST-74).